A 328-amino-acid polypeptide reads, in one-letter code: DNA polymerase III subunit delta' (328 aa).

As to quaternary structure, DNA polymerase III contains a core (composed of alpha, epsilon and theta chains) that associates with a tau subunit. This core dimerizes to form the POLIII' complex. PolIII' associates with the gamma complex (composed of gamma, delta, delta', psi and chi chains) and with the beta chain to form the complete DNA polymerase III complex.

It catalyses the reaction DNA(n) + a 2'-deoxyribonucleoside 5'-triphosphate = DNA(n+1) + diphosphate. DNA polymerase III is a complex, multichain enzyme responsible for most of the replicative synthesis in bacteria. This DNA polymerase also exhibits 3' to 5' exonuclease activity. The polypeptide is DNA polymerase III subunit delta' (holB) (Pseudomonas aeruginosa (strain ATCC 15692 / DSM 22644 / CIP 104116 / JCM 14847 / LMG 12228 / 1C / PRS 101 / PAO1)).